The chain runs to 513 residues: ATP synthase subunit alpha 1 (513 aa).

169-176 lines the ATP pocket; it reads GDRQCGKT.

This sequence belongs to the ATPase alpha/beta chains family. In terms of assembly, F-type ATPases have 2 components, CF(1) - the catalytic core - and CF(0) - the membrane proton channel. CF(1) has five subunits: alpha(3), beta(3), gamma(1), delta(1), epsilon(1). CF(0) has three main subunits: a(1), b(2) and c(9-12). The alpha and beta chains form an alternating ring which encloses part of the gamma chain. CF(1) is attached to CF(0) by a central stalk formed by the gamma and epsilon chains, while a peripheral stalk is formed by the delta and b chains.

Its subcellular location is the cell inner membrane. It catalyses the reaction ATP + H2O + 4 H(+)(in) = ADP + phosphate + 5 H(+)(out). In terms of biological role, produces ATP from ADP in the presence of a proton gradient across the membrane. The alpha chain is a regulatory subunit. The protein is ATP synthase subunit alpha 1 of Burkholderia pseudomallei (strain 1710b).